A 248-amino-acid chain; its full sequence is 4-hydroxy-tetrahydrodipicolinate reductase (248 aa).

NAD(+) is bound by residues Gly9–Val14, Gly77–Thr79, and Ala104–Phe107. His134 (proton donor/acceptor) is an active-site residue. His135 is a binding site for (S)-2,3,4,5-tetrahydrodipicolinate. Catalysis depends on Lys138, which acts as the Proton donor. A (S)-2,3,4,5-tetrahydrodipicolinate-binding site is contributed by Gly144–Thr145.

It belongs to the DapB family.

It localises to the cytoplasm. It carries out the reaction (S)-2,3,4,5-tetrahydrodipicolinate + NAD(+) + H2O = (2S,4S)-4-hydroxy-2,3,4,5-tetrahydrodipicolinate + NADH + H(+). The enzyme catalyses (S)-2,3,4,5-tetrahydrodipicolinate + NADP(+) + H2O = (2S,4S)-4-hydroxy-2,3,4,5-tetrahydrodipicolinate + NADPH + H(+). Its pathway is amino-acid biosynthesis; L-lysine biosynthesis via DAP pathway; (S)-tetrahydrodipicolinate from L-aspartate: step 4/4. Catalyzes the conversion of 4-hydroxy-tetrahydrodipicolinate (HTPA) to tetrahydrodipicolinate. This chain is 4-hydroxy-tetrahydrodipicolinate reductase, found in Corynebacterium glutamicum (strain ATCC 13032 / DSM 20300 / JCM 1318 / BCRC 11384 / CCUG 27702 / LMG 3730 / NBRC 12168 / NCIMB 10025 / NRRL B-2784 / 534).